The primary structure comprises 437 residues: uncharacterized protein (437 aa).

This is an uncharacterized protein from Rhodococcus erythropolis (Arthrobacter picolinophilus).